The primary structure comprises 547 residues: T-complex protein 1 subunit alpha (547 aa).

Belongs to the TCP-1 chaperonin family. As to quaternary structure, heterooligomeric complex of about 850 to 900 kDa that forms two stacked rings, 12 to 16 nm in diameter.

The protein resides in the cytoplasm. In terms of biological role, molecular chaperone; assists the folding of proteins upon ATP hydrolysis. Known to play a role, in vitro, in the folding of actin and tubulin. This Tetrahymena pyriformis protein is T-complex protein 1 subunit alpha.